The sequence spans 747 residues: Cysteine--tRNA ligase, cytoplasmic (747 aa).

The disordered stretch occupies residues Met-1 to Gln-25. Positions Pro-15–Gln-25 are enriched in polar residues. Cys-54 is a binding site for Zn(2+). Gly-55 serves as a coordination point for L-cysteine. The 'HIGH' region motif lies at Pro-56 to His-66. L-cysteine is bound at residue Thr-95. The short motif at Lys-100–Lys-103 is the 'KIIK' region element. Zn(2+) contacts are provided by Cys-347, His-372, and Glu-376. Position 372 (His-372) interacts with L-cysteine. The 'KMSKS' region signature appears at Lys-405–Ser-409. Lys-408 serves as a coordination point for ATP. The span at Glu-651–Lys-683 shows a compositional bias: basic and acidic residues. The segment at Glu-651–Lys-722 is disordered.

The protein belongs to the class-I aminoacyl-tRNA synthetase family. As to quaternary structure, homodimer. Zn(2+) serves as cofactor.

It localises to the cytoplasm. The catalysed reaction is tRNA(Cys) + L-cysteine + ATP = L-cysteinyl-tRNA(Cys) + AMP + diphosphate. Its function is as follows. Catalyzes the ATP-dependent ligation of cysteine to tRNA(Cys). This is Cysteine--tRNA ligase, cytoplasmic (cars1) from Xenopus tropicalis (Western clawed frog).